Consider the following 492-residue polypeptide: Gamma-aminobutyric acid receptor subunit alpha-3 (492 aa).

A signal peptide spans methionine 1 to glycine 28. At glutamine 29–lysine 274 the chain is on the extracellular side. Residue asparagine 63 is glycosylated (N-linked (GlcNAc...) asparagine). A 4-aminobutanoate-binding site is contributed by arginine 119. Residues asparagine 163 and asparagine 176 are each glycosylated (N-linked (GlcNAc...) asparagine). Threonine 182 contacts 4-aminobutanoate. Cysteine 191 and cysteine 205 are oxidised to a cystine. N-linked (GlcNAc...) asparagine glycosylation occurs at asparagine 228. The helical transmembrane segment at isoleucine 275–valine 295 threads the bilayer. The Cytoplasmic portion of the chain corresponds to serine 296–proline 305. A helical membrane pass occupies residues alanine 306 to alanine 325. Residues arginine 326–threonine 336 are Extracellular-facing. A helical membrane pass occupies residues alanine 337 to alanine 357. The Cytoplasmic segment spans residues threonine 358 to lysine 457. Serine 426 is subject to Phosphoserine. Phosphothreonine is present on threonine 427. Serine 433 is subject to Phosphoserine. The chain crosses the membrane as a helical span at residues isoleucine 458–tyrosine 478. At valine 479 to glutamine 492 the chain is on the extracellular side.

Belongs to the ligand-gated ion channel (TC 1.A.9) family. Gamma-aminobutyric acid receptor (TC 1.A.9.5) subfamily. GABRA3 sub-subfamily. In terms of assembly, heteropentamer, formed by a combination of alpha (GABRA1-6), beta (GABRB1-3), gamma (GABRG1-3), delta (GABRD), epsilon (GABRE), rho (GABRR1-3), pi (GABRP) and theta (GABRQ) chains, each subunit exhibiting distinct physiological and pharmacological properties. Binds UBQLN1. Interacts with GPHN.

The protein localises to the postsynaptic cell membrane. Its subcellular location is the cell membrane. The enzyme catalyses chloride(in) = chloride(out). Functionally, alpha subunit of the heteropentameric ligand-gated chloride channel gated by gamma-aminobutyric acid (GABA), a major inhibitory neurotransmitter in the brain. GABA-gated chloride channels, also named GABA(A) receptors (GABAAR), consist of five subunits arranged around a central pore and contain GABA active binding site(s) located at the alpha and beta subunit interface(s). When activated by GABA, GABAARs selectively allow the flow of chloride anions across the cell membrane down their electrochemical gradient. Chloride influx into the postsynaptic neuron following GABAAR opening decreases the neuron ability to generate a new action potential, thereby reducing nerve transmission. This chain is Gamma-aminobutyric acid receptor subunit alpha-3 (GABRA3), found in Bos taurus (Bovine).